Consider the following 209-residue polypeptide: Protein TIC 20-v, chloroplastic (209 aa).

A chloroplast-targeting transit peptide spans M1–L49. 4 helical membrane passes run I63–I83, A103–V123, V132–L152, and T173–L193.

It belongs to the Tic20 family. In terms of assembly, part of the Tic complex. In terms of tissue distribution, expressed in leaves, siliques and roots.

Its subcellular location is the plastid. It localises to the chloroplast inner membrane. May be involved in protein precursor import into chloroplasts. Not redundant with TIC20-I, TIC20-II or TIC20-IV. The chain is Protein TIC 20-v, chloroplastic (TIC20-V) from Arabidopsis thaliana (Mouse-ear cress).